A 657-amino-acid chain; its full sequence is Glycogen debranching enzyme (657 aa).

The active-site Nucleophile is the aspartate 334. The active-site Proton donor is the glutamate 369. The disordered stretch occupies residues alanine 458 to threonine 485. Residues aspartate 465–histidine 475 are compositionally biased toward polar residues.

This sequence belongs to the glycosyl hydrolase 13 family.

It localises to the cytoplasm. The catalysed reaction is Hydrolysis of (1-&gt;6)-alpha-D-glucosidic linkages to branches with degrees of polymerization of three or four glucose residues in limit dextrin.. Its pathway is glycan degradation; glycogen degradation. With respect to regulation, slightly activated by Ca(2+). Inhibited by divalent cations such as Zn(2+), Cu(2+), Fe(2+), Mg(2+), Mn(2+), but only slightly inhibited by EDTA. In terms of biological role, removes maltotriose and maltotetraose chains that are attached by 1,6-alpha-linkage to the limit dextrin main chain, generating a debranched limit dextrin. Hydrolyzes the alpha-1,6-glycosidic linkages in amylopectin while does not hydrolyze the alpha-1,4-glycosidic linkages in amylose. Native glycogen is a poor substrate. This Dickeya chrysanthemi (Pectobacterium chrysanthemi) protein is Glycogen debranching enzyme.